The following is a 305-amino-acid chain: MSKIPVIVIVGPTAVGKTSLSIELAKKLDGEIISGDSMQVYRGLDIGTAKITPEEMDGIKHYLIDVTNPSEPFTAAKFQIETRKCIETIHQAGRLPIIVGGTGLYIQSVFYDYDFGNVSEDKAYRAELEQLDKTVLWQMLEQKDPESAAQIHENNKRRVIRALEVMHLTGKPFSEYQVNNVLNDRYQPLFLGLDLDRALLYERINQRVNLMFEEGLVTEAKKLYEQHLVDVPAVRGIGYKELFPYFEGKSSLEEAKELIQKNSRHFAKRQLTWFRNRMDIDWIQAGVSSTESEALNKATTFLTAK.

11-18 is an ATP binding site; sequence GPTAVGKT. Residue 13-18 coordinates substrate; that stretch reads TAVGKT. Residues 36–39 form an interaction with substrate tRNA region; that stretch reads DSMQ.

This sequence belongs to the IPP transferase family. As to quaternary structure, monomer. Requires Mg(2+) as cofactor.

It carries out the reaction adenosine(37) in tRNA + dimethylallyl diphosphate = N(6)-dimethylallyladenosine(37) in tRNA + diphosphate. In terms of biological role, catalyzes the transfer of a dimethylallyl group onto the adenine at position 37 in tRNAs that read codons beginning with uridine, leading to the formation of N6-(dimethylallyl)adenosine (i(6)A). The polypeptide is tRNA dimethylallyltransferase (Listeria monocytogenes serotype 4b (strain CLIP80459)).